Reading from the N-terminus, the 361-residue chain is Chorismate synthase (361 aa).

Arg-48 and Arg-54 together coordinate NADP(+). FMN-binding positions include 125 to 127, 238 to 239, Gly-278, 293 to 297, and Arg-319; these read RSS, NA, and KPTSS.

It belongs to the chorismate synthase family. Homotetramer. Requires FMNH2 as cofactor.

It carries out the reaction 5-O-(1-carboxyvinyl)-3-phosphoshikimate = chorismate + phosphate. It participates in metabolic intermediate biosynthesis; chorismate biosynthesis; chorismate from D-erythrose 4-phosphate and phosphoenolpyruvate: step 7/7. In terms of biological role, catalyzes the anti-1,4-elimination of the C-3 phosphate and the C-6 proR hydrogen from 5-enolpyruvylshikimate-3-phosphate (EPSP) to yield chorismate, which is the branch point compound that serves as the starting substrate for the three terminal pathways of aromatic amino acid biosynthesis. This reaction introduces a second double bond into the aromatic ring system. The protein is Chorismate synthase of Escherichia coli (strain SE11).